The chain runs to 1180 residues: Tudor domain-containing protein 1 (1180 aa).

2 disordered regions span residues Met-1–Asn-66 and Ser-79–Lys-138. Positions Asn-27 to Leu-41 are enriched in basic and acidic residues. 2 stretches are compositionally biased toward polar residues: residues Ser-79 to Gly-91 and Asn-110 to Pro-122. Positions 170, 173, 181, 184, 190, 194, 202, and 206 each coordinate Zn(2+). The segment at Cys-170–Cys-206 adopts an MYND-type zinc-finger fold. In terms of domain architecture, Tudor 1 spans Ile-312–Phe-372. The disordered stretch occupies residues Ser-450 to Lys-469. Tudor domains lie at Tyr-541–Leu-600, Lys-762–Leu-821, and Arg-990–Leu-1048.

This sequence belongs to the TDRD1 family. As to quaternary structure, found in a mRNP complex, at least composed of TDRD1, TDRD6, TDRD7 and DDX4. Interacts with MAEL. Interacts with PIWIL1, PIWIL2 and PIWIL4 (when methylated on arginine residues). Interacts with TDRD12. In terms of tissue distribution, testis and ovary specific. Also expressed in several cancers.

The protein resides in the cytoplasm. Functionally, plays a central role during spermatogenesis by participating in the repression transposable elements and preventing their mobilization, which is essential for the germline integrity. Acts via the piRNA metabolic process, which mediates the repression of transposable elements during meiosis by forming complexes composed of piRNAs and Piwi proteins and governs the methylation and subsequent repression of transposons. Required for the localization of Piwi proteins to the meiotic nuage. Involved in the piRNA metabolic process by ensuring the entry of correct transcripts into the normal piRNA pool and limiting the entry of cellular transcripts into the piRNA pathway. May act by allowing the recruitment of piRNA biogenesis or loading factors that ensure the correct entry of transcripts and piRNAs into Piwi proteins. The polypeptide is Tudor domain-containing protein 1 (TDRD1) (Homo sapiens (Human)).